The following is a 156-amino-acid chain: 13 kDa prolamin C (156 aa).

A signal peptide spans Met1–Ala19. Residues Gln77–Leu84 are octapeptide unique to cereal prolamins.

It belongs to the prolamin family.

The protein resides in the vacuole. It localises to the aleurone grain. Its function is as follows. Seed storage protein; serves as a source of nitrogen, carbon and sulfur for the young developing seedling. This chain is 13 kDa prolamin C (PROLM25), found in Oryza sativa subsp. japonica (Rice).